Reading from the N-terminus, the 283-residue chain is Polyamine aminopropyltransferase (283 aa).

The PABS domain occupies 3 to 236 (GIWFSELQTP…GLWAFSLGSK (234 aa)). Gln-32 lines the S-methyl-5'-thioadenosine pocket. Spermidine-binding residues include His-63 and Asp-87. S-methyl-5'-thioadenosine is bound by residues Glu-107 and 138–139 (DG). Asp-156 serves as the catalytic Proton acceptor. Position 156 to 159 (156 to 159 (DSTD)) interacts with spermidine. Pro-163 serves as a coordination point for S-methyl-5'-thioadenosine.

The protein belongs to the spermidine/spermine synthase family. As to quaternary structure, homodimer or homotetramer.

It is found in the cytoplasm. It carries out the reaction S-adenosyl 3-(methylsulfanyl)propylamine + putrescine = S-methyl-5'-thioadenosine + spermidine + H(+). The protein operates within amine and polyamine biosynthesis; spermidine biosynthesis; spermidine from putrescine: step 1/1. Its function is as follows. Catalyzes the irreversible transfer of a propylamine group from the amino donor S-adenosylmethioninamine (decarboxy-AdoMet) to putrescine (1,4-diaminobutane) to yield spermidine. The protein is Polyamine aminopropyltransferase of Moorella thermoacetica (strain ATCC 39073 / JCM 9320).